Here is a 396-residue protein sequence, read N- to C-terminus: MSTTAPRAVAERWRELHGEDHWKGLLDPLDADLRRSVIGYGELAQATNDAFIREAWSPHAGACRYSRDRFLEKAQASTQLAGLYEVTAFFYATAGAGGVPAPFMVRNRESNWMGYVAVATDAGVAALGRRDVVVAWRGTVRPMEWLNDLDFTLVSAAGVLGAGGRSPAPRVHRGWLSIYTASDPASKYSKLSAREQISDEIKRLMDKYKDEETSITVVGHSLGAAVATLNAADIVSNGLNQHGACPVTAVAFACPRVGDSGFRKLFDELPGLRLLRVCNSPDVVPKYPPMGYADVGVELPVDTRRSPYLKSPGNQAVWHSLECYMHGVAGAQGKRGGFKLEVDRDVALVNKNVDALKEEYHVPPSWSVQRDKGMVRGADGHWKLMDYEGEESSQDK.

Residue Ser221 is the Acyl-ester intermediate of the active site. Active-site charge relay system residues include Ser221, Asp282, and His319.

It belongs to the AB hydrolase superfamily. Lipase family.

It localises to the cytoplasm. In terms of biological role, acylhydrolase that catalyzes the hydrolysis of phospholipids at the sn-1 position. The polypeptide is Phospholipase A1-II 4 (Oryza sativa subsp. japonica (Rice)).